The sequence spans 441 residues: Tol-Pal system protein TolB (441 aa).

A signal peptide spans 1-23 (MRNAIATVLLGLAMLLPVGAVQA). The disordered stretch occupies residues 420-441 (RNLKPVKTPDGASDPSWSPLQN).

This sequence belongs to the TolB family. As to quaternary structure, the Tol-Pal system is composed of five core proteins: the inner membrane proteins TolA, TolQ and TolR, the periplasmic protein TolB and the outer membrane protein Pal. They form a network linking the inner and outer membranes and the peptidoglycan layer.

It localises to the periplasm. Part of the Tol-Pal system, which plays a role in outer membrane invagination during cell division and is important for maintaining outer membrane integrity. In Ruegeria sp. (strain TM1040) (Silicibacter sp.), this protein is Tol-Pal system protein TolB.